Reading from the N-terminus, the 722-residue chain is G2-specific protein kinase fin1 (722 aa).

The Protein kinase domain maps to 4–281; sequence YKILECIGHG…TYQLLRSPIL (278 aa). ATP-binding positions include 10–18 and Lys33; that span reads IGHGSFGRI. The Proton acceptor role is filled by Asp151. The tract at residues 528-557 is disordered; that stretch reads LSVESDETAVSASSGESVPTDSTLTDTKSK. Positions 535–546 are enriched in polar residues; that stretch reads TAVSASSGESVP.

This sequence belongs to the protein kinase superfamily. Ser/Thr protein kinase family. NIMA subfamily.

The protein localises to the cytoplasm. Its subcellular location is the cytoskeleton. The protein resides in the microtubule organizing center. It is found in the spindle pole body. It catalyses the reaction L-seryl-[protein] + ATP = O-phospho-L-seryl-[protein] + ADP + H(+). The catalysed reaction is L-threonyl-[protein] + ATP = O-phospho-L-threonyl-[protein] + ADP + H(+). Promotes chromosome condensation and nuclear envelope dynamics during mitosis. Activity appears at metaphase-anaphase transition. This is G2-specific protein kinase fin1 (fin1) from Schizosaccharomyces pombe (strain 972 / ATCC 24843) (Fission yeast).